Reading from the N-terminus, the 375-residue chain is tRNA-specific 2-thiouridylase MnmA (375 aa).

ATP contacts are provided by residues 12-19 and Met38; that span reads GMSGGVDS. The segment at 98 to 100 is interaction with target base in tRNA; that stretch reads NPD. The active-site Nucleophile is the Cys103. Cysteines 103 and 200 form a disulfide. ATP is bound at residue Gly127. Residues 150 to 152 are interaction with tRNA; that stretch reads KDQ. Cys200 acts as the Cysteine persulfide intermediate in catalysis. The tract at residues 312-313 is interaction with tRNA; it reads RY.

This sequence belongs to the MnmA/TRMU family.

It is found in the cytoplasm. The enzyme catalyses S-sulfanyl-L-cysteinyl-[protein] + uridine(34) in tRNA + AH2 + ATP = 2-thiouridine(34) in tRNA + L-cysteinyl-[protein] + A + AMP + diphosphate + H(+). Its function is as follows. Catalyzes the 2-thiolation of uridine at the wobble position (U34) of tRNA, leading to the formation of s(2)U34. This is tRNA-specific 2-thiouridylase MnmA from Ligilactobacillus salivarius (strain UCC118) (Lactobacillus salivarius).